A 64-amino-acid polypeptide reads, in one-letter code: Small cysteine-rich protein (64 aa).

An N-terminal signal peptide occupies residues 1-17 (FVCVQARQIDPEQILRT). Positions 18-19 (PE) are excised as a propeptide.

Post-translationally, contains 4 disulfide bonds.

It is found in the secreted. Its subcellular location is the nematocyst. The polypeptide is Small cysteine-rich protein (Anemonia viridis (Snakelocks anemone)).